We begin with the raw amino-acid sequence, 194 residues long: Peptidyl-tRNA hydrolase (194 aa).

A tRNA-binding site is contributed by Y16. The active-site Proton acceptor is the H21. TRNA is bound by residues F67, N69, and N115.

This sequence belongs to the PTH family. Monomer.

Its subcellular location is the cytoplasm. The enzyme catalyses an N-acyl-L-alpha-aminoacyl-tRNA + H2O = an N-acyl-L-amino acid + a tRNA + H(+). Hydrolyzes ribosome-free peptidyl-tRNAs (with 1 or more amino acids incorporated), which drop off the ribosome during protein synthesis, or as a result of ribosome stalling. In terms of biological role, catalyzes the release of premature peptidyl moieties from peptidyl-tRNA molecules trapped in stalled 50S ribosomal subunits, and thus maintains levels of free tRNAs and 50S ribosomes. This Escherichia coli O81 (strain ED1a) protein is Peptidyl-tRNA hydrolase.